The following is a 204-amino-acid chain: Dephospho-CoA kinase (204 aa).

Residues 4-201 enclose the DPCK domain; sequence VIGLTGGIAS…EKYLAMCKKN (198 aa). 12-17 provides a ligand contact to ATP; the sequence is ASGKTT.

Belongs to the CoaE family.

The protein resides in the cytoplasm. It catalyses the reaction 3'-dephospho-CoA + ATP = ADP + CoA + H(+). Its pathway is cofactor biosynthesis; coenzyme A biosynthesis; CoA from (R)-pantothenate: step 5/5. Catalyzes the phosphorylation of the 3'-hydroxyl group of dephosphocoenzyme A to form coenzyme A. The polypeptide is Dephospho-CoA kinase (Vibrio parahaemolyticus serotype O3:K6 (strain RIMD 2210633)).